Consider the following 491-residue polypeptide: Anthranilate synthase component 1 (491 aa).

L-tryptophan contacts are provided by residues S49 and 271–273; that span reads PYL. 306 to 307 lines the chorismate pocket; the sequence is GT. E333 contacts Mg(2+). Chorismate contacts are provided by residues Y421, R441, 455-457, and G457; that span reads GAG. Residue E470 participates in Mg(2+) binding.

It belongs to the anthranilate synthase component I family. As to quaternary structure, heterotetramer consisting of two non-identical subunits: a beta subunit (TrpG) and a large alpha subunit (TrpE). The cofactor is Mg(2+).

The catalysed reaction is chorismate + L-glutamine = anthranilate + pyruvate + L-glutamate + H(+). Its pathway is amino-acid biosynthesis; L-tryptophan biosynthesis; L-tryptophan from chorismate: step 1/5. Its activity is regulated as follows. Feedback inhibited by tryptophan. In terms of biological role, part of a heterotetrameric complex that catalyzes the two-step biosynthesis of anthranilate, an intermediate in the biosynthesis of L-tryptophan. In the first step, the glutamine-binding beta subunit (TrpG) of anthranilate synthase (AS) provides the glutamine amidotransferase activity which generates ammonia as a substrate that, along with chorismate, is used in the second step, catalyzed by the large alpha subunit of AS (TrpE) to produce anthranilate. In the absence of TrpG, TrpE can synthesize anthranilate directly from chorismate and high concentrations of ammonia. The sequence is that of Anthranilate synthase component 1 (trpE) from Neisseria meningitidis serogroup A / serotype 4A (strain DSM 15465 / Z2491).